The sequence spans 306 residues: Glutaminase (306 aa).

Substrate-binding residues include S64, N115, E159, N166, Y190, Y242, and V260.

The protein belongs to the glutaminase family. Homotetramer.

It catalyses the reaction L-glutamine + H2O = L-glutamate + NH4(+). In Aliivibrio fischeri (strain MJ11) (Vibrio fischeri), this protein is Glutaminase.